Reading from the N-terminus, the 305-residue chain is Glutaminase (305 aa).

Substrate-binding residues include Ser-61, Asn-113, Glu-158, Asn-165, Tyr-189, Tyr-241, and Val-259.

The protein belongs to the glutaminase family. As to quaternary structure, homotetramer.

It catalyses the reaction L-glutamine + H2O = L-glutamate + NH4(+). The chain is Glutaminase from Clostridium botulinum (strain Kyoto / Type A2).